A 307-amino-acid chain; its full sequence is 4-diphosphocytidyl-2-C-methyl-D-erythritol kinase (307 aa).

The active site involves Lys-14. 107-117 (PVAGGMAGGSA) serves as a coordination point for ATP. The active site involves Asp-149.

This sequence belongs to the GHMP kinase family. IspE subfamily.

It carries out the reaction 4-CDP-2-C-methyl-D-erythritol + ATP = 4-CDP-2-C-methyl-D-erythritol 2-phosphate + ADP + H(+). Its pathway is isoprenoid biosynthesis; isopentenyl diphosphate biosynthesis via DXP pathway; isopentenyl diphosphate from 1-deoxy-D-xylulose 5-phosphate: step 3/6. Its function is as follows. Catalyzes the phosphorylation of the position 2 hydroxy group of 4-diphosphocytidyl-2C-methyl-D-erythritol. This is 4-diphosphocytidyl-2-C-methyl-D-erythritol kinase from Thermobifida fusca (strain YX).